The primary structure comprises 140 residues: Ribosome-binding factor A (140 aa).

Positions 1-23 (MLRDRNRSGVRGGAEGPSQRQRR) are disordered.

It belongs to the RbfA family. In terms of assembly, monomer. Binds 30S ribosomal subunits, but not 50S ribosomal subunits or 70S ribosomes.

The protein resides in the cytoplasm. In terms of biological role, one of several proteins that assist in the late maturation steps of the functional core of the 30S ribosomal subunit. Associates with free 30S ribosomal subunits (but not with 30S subunits that are part of 70S ribosomes or polysomes). Required for efficient processing of 16S rRNA. May interact with the 5'-terminal helix region of 16S rRNA. This Acidiphilium cryptum (strain JF-5) protein is Ribosome-binding factor A.